The sequence spans 360 residues: Phospho-N-acetylmuramoyl-pentapeptide-transferase (360 aa).

Helical transmembrane passes span Tyr-21 to Gly-41, Thr-73 to Leu-93, Ser-94 to Val-114, Trp-132 to Gly-152, Val-168 to Ser-188, Gly-199 to Thr-219, Ala-236 to Phe-256, Val-263 to Leu-283, Leu-288 to Val-308, and Val-338 to Lys-358.

It belongs to the glycosyltransferase 4 family. MraY subfamily. Mg(2+) is required as a cofactor.

It is found in the cell inner membrane. The catalysed reaction is UDP-N-acetyl-alpha-D-muramoyl-L-alanyl-gamma-D-glutamyl-meso-2,6-diaminopimeloyl-D-alanyl-D-alanine + di-trans,octa-cis-undecaprenyl phosphate = di-trans,octa-cis-undecaprenyl diphospho-N-acetyl-alpha-D-muramoyl-L-alanyl-D-glutamyl-meso-2,6-diaminopimeloyl-D-alanyl-D-alanine + UMP. The protein operates within cell wall biogenesis; peptidoglycan biosynthesis. Its function is as follows. Catalyzes the initial step of the lipid cycle reactions in the biosynthesis of the cell wall peptidoglycan: transfers peptidoglycan precursor phospho-MurNAc-pentapeptide from UDP-MurNAc-pentapeptide onto the lipid carrier undecaprenyl phosphate, yielding undecaprenyl-pyrophosphoryl-MurNAc-pentapeptide, known as lipid I. The polypeptide is Phospho-N-acetylmuramoyl-pentapeptide-transferase (Vibrio vulnificus (strain CMCP6)).